The following is a 478-amino-acid chain: MTHSTQQLSPEGVAEGKRGRLIRELVNRDKTPLIILIMAAVVGVVTGLLGVAFDRGVDWVQQQRLLALANVADYALLVWPLAFIMSALLAMMGYFLVSRFAPEAGGSGIPEIEGAMEEMRPVRWWRVIPVKFIGGLGTLGAGMVLGREGPMVQMGGNSGRMIVDIFRLRSPEARHSLLATGAAAGLSAAFNAPLAGILFVIEEMRSQFRYSLVSIKAVFIGVITSTIVYRYFNGERAIIEVGKLSDAPLNTLWLYLLLGIIFGAVGVIFNALIFRTQDMFVRFHGGDWRKLVLIGGLLGGMCGLLALLHGNAVGGGFALIPIAAAGNFSIGMLLFIFIARVITTLLCFGSGAPGGIFAPMLALGTILGTAFGLSCAHFFPQYGIEAGTFAIAGMGALFAASVRAPLTGIVLVLEMTDNYQLILPMIVTCLGATLIAQFMGGKPLYSAILARTLAKQEQARATVIAQEPAVENTPQIGK.

At 1 to 32 (MTHSTQQLSPEGVAEGKRGRLIRELVNRDKTP) the chain is on the cytoplasmic side. Residues 33–69 (LIILIMAAVVGVVTGLLGVAFDRGVDWVQQQRLLALA) traverse the membrane as a helical segment. Topologically, residues 70–76 (NVADYAL) are periplasmic. A helical transmembrane segment spans residues 77–100 (LVWPLAFIMSALLAMMGYFLVSRF). A Selectivity filter part_1 motif is present at residues 106–110 (GSGIP). Residue Ser107 participates in chloride binding. The helical intramembrane region spans 109-116 (IPEIEGAM). Residues 117-123 (EEMRPVR) are Cytoplasmic-facing. The next 2 membrane-spanning stretches (helical) occupy residues 124-141 (WWRV…TLGA) and 148-166 (EGPM…VDIF). Residues 146–150 (GREGP) carry the Selectivity filter part_2 motif. Over 167-176 (RLRSPEARHS) the chain is Cytoplasmic. 2 intramembrane regions (helical) span residues 177 to 189 (LLAT…LSAA) and 193 to 201 (PLAGILFVI). Topologically, residues 202–214 (EEMRSQFRYSLVS) are cytoplasmic. The helical transmembrane segment at 215-232 (IKAVFIGVITSTIVYRYF) threads the bilayer. The Periplasmic portion of the chain corresponds to 233–252 (NGERAIIEVGKLSDAPLNTL). Residues 253-281 (WLYLLLGIIFGAVGVIFNALIFRTQDMFV) form a helical membrane-spanning segment. Residues 282–287 (RFHGGD) lie on the Cytoplasmic side of the membrane. The helical transmembrane segment at 288-309 (WRKLVLIGGLLGGMCGLLALLH) threads the bilayer. At 310–329 (GNAVGGGFALIPIAAAGNFS) the chain is on the periplasmic side. A run of 2 helical transmembrane segments spans residues 330–349 (IGML…LCFG) and 355–376 (GIFA…LSCA). The Selectivity filter part_3 motif lies at 355–359 (GIFAP). 2 residues coordinate chloride: Ile356 and Phe357. At 377–386 (HFFPQYGIEA) the chain is on the periplasmic side. The segment at residues 387–401 (GTFAIAGMGALFAAS) is an intramembrane region (helical). Positions 402–404 (VRA) form an intramembrane region, note=Loop between two helices. An intramembrane region (helical) is located at residues 405-416 (PLTGIVLVLEMT). The segment at residues 417–421 (DNYQL) is an intramembrane region (note=Loop between two helices). The helical transmembrane segment at 422–438 (ILPMIVTCLGATLIAQF) threads the bilayer. At 439–478 (MGGKPLYSAILARTLAKQEQARATVIAQEPAVENTPQIGK) the chain is on the cytoplasmic side. Tyr445 contributes to the chloride binding site.

This sequence belongs to the chloride channel (TC 2.A.49) family. ClcA subfamily. Homodimer.

It is found in the cell inner membrane. It carries out the reaction 2 chloride(in) + H(+)(out) = 2 chloride(out) + H(+)(in). In terms of biological role, proton-coupled chloride transporter. Functions as antiport system and exchanges two chloride ions for 1 proton. Probably acts as an electrical shunt for an outwardly-directed proton pump that is linked to amino acid decarboxylation, as part of the extreme acid resistance (XAR) response. The polypeptide is H(+)/Cl(-) exchange transporter ClcA (Yersinia pestis bv. Antiqua (strain Antiqua)).